A 301-amino-acid polypeptide reads, in one-letter code: Probable alpha-L-glutamate ligase (301 aa).

One can recognise an ATP-grasp domain in the interval 104–287 (LQLLSRKGIG…VAGMIVEFIE (184 aa)). ATP contacts are provided by residues lysine 141, 178 to 179 (EF), aspartate 187, and 211 to 213 (RSN). Mg(2+) is bound by residues aspartate 248, glutamate 260, and asparagine 262. 3 residues coordinate Mn(2+): aspartate 248, glutamate 260, and asparagine 262.

The protein belongs to the RimK family. Mg(2+) serves as cofactor. Requires Mn(2+) as cofactor.

This chain is Probable alpha-L-glutamate ligase, found in Teredinibacter turnerae (strain ATCC 39867 / T7901).